Here is a 480-residue protein sequence, read N- to C-terminus: Histone-lysine N-methyltransferase ASHR1 (480 aa).

The SET domain maps to 11 to 248 (RCLGVSNLPQ…KDSEITISYI (238 aa)). Positions 56, 59, 68, 71, 77, 81, 89, and 93 each coordinate Zn(2+). The MYND-type zinc-finger motif lies at 56–93 (CDGCFKTNNLKKCSACQVVWYCGSSCQKSEWKLHRDEC).

The protein belongs to the class V-like SAM-binding methyltransferase superfamily. Histone-lysine methyltransferase family. SET2 subfamily.

The protein resides in the nucleus. Its subcellular location is the chromosome. It carries out the reaction L-lysyl-[histone] + S-adenosyl-L-methionine = N(6)-methyl-L-lysyl-[histone] + S-adenosyl-L-homocysteine + H(+). In terms of biological role, histone methyltransferase. This is Histone-lysine N-methyltransferase ASHR1 (ASHR1) from Arabidopsis thaliana (Mouse-ear cress).